A 92-amino-acid polypeptide reads, in one-letter code: Putative pterin-4-alpha-carbinolamine dehydratase (92 aa).

It belongs to the pterin-4-alpha-carbinolamine dehydratase family.

The enzyme catalyses (4aS,6R)-4a-hydroxy-L-erythro-5,6,7,8-tetrahydrobiopterin = (6R)-L-erythro-6,7-dihydrobiopterin + H2O. The chain is Putative pterin-4-alpha-carbinolamine dehydratase from Haloarcula marismortui (strain ATCC 43049 / DSM 3752 / JCM 8966 / VKM B-1809) (Halobacterium marismortui).